A 408-amino-acid polypeptide reads, in one-letter code: MSITPEVKSRGMKFAEEQLLKHGWTQGKGLGRKENGITQALRVTLKQDTYGVGHDPAKEFTNHWWNDLFNKTAANLVVETRQDGVQIRRLSKETTRQDHAKPNLLYQKFVKTATLTSSGEKPDKDWESCSDDDSQEPKPPNVLTDEMLLQACEGRTAHKAARLGITMKAKLARLEAQEQAFLAQLKGQDPGVPQLQSESKSPKKKKKKRKQKEEEEPTTTERSAEKYSEHTDESIRKSKKKKRQHQEERVTDEREGTAIENEEETIRTGGLGELKNREHVDRSFRKKKRRGQHHEERAELAVLDNEGGKVAVSEVGTEEAERRVYTHPCGRSKKRRQHEEEDLNTEDEEVEEALVDSGTREAESRSCSDQKRGRSKKKRRQYQEEEVLDGPGVNTAQKAKKKKQKKRD.

Met1 bears the N-acetylmethionine mark. Residue Thr4 is modified to Phosphothreonine. Residues 11-57 (GMKFAEEQLLKHGWTQGKGLGRKENGITQALRVTLKQDTYGVGHDPA) form the G-patch domain. Lys46 is covalently cross-linked (Glycyl lysine isopeptide (Lys-Gly) (interchain with G-Cter in SUMO2)). Phosphothreonine is present on Thr116. 2 disordered regions span residues 116–141 (TSSG…KPPN) and 187–408 (GQDP…KKRD). A phosphoserine mark is found at Ser128 and Ser130. Composition is skewed to basic and acidic residues over residues 222-236 (RSAE…ESIR), 245-257 (HQEE…REGT), and 274-283 (LKNREHVDRS). A compositionally biased stretch (acidic residues) spans 340-354 (EEDLNTEDEEVEEAL). The segment covering 358–372 (GTREAESRSCSDQKR) has biased composition (basic and acidic residues). The segment covering 398–408 (KAKKKKQKKRD) has biased composition (basic residues).

This chain is G patch domain-containing protein 4 (GPATCH4), found in Bos taurus (Bovine).